A 131-amino-acid chain; its full sequence is Small ribosomal subunit protein uS11 (131 aa).

This sequence belongs to the universal ribosomal protein uS11 family. In terms of assembly, part of the 30S ribosomal subunit. Interacts with proteins S7 and S18. Binds to IF-3.

In terms of biological role, located on the platform of the 30S subunit, it bridges several disparate RNA helices of the 16S rRNA. Forms part of the Shine-Dalgarno cleft in the 70S ribosome. The polypeptide is Small ribosomal subunit protein uS11 (Deinococcus deserti (strain DSM 17065 / CIP 109153 / LMG 22923 / VCD115)).